The sequence spans 745 residues: Ribosomal protein S6 kinase alpha-6 (745 aa).

The tract at residues 1–28 (MLPFAPQDEPWDREMEVFSGGGASSGEV) is disordered. The 258-residue stretch at 73–330 (FELLKVLGQG…VEEIKRHLFF (258 aa)) folds into the Protein kinase 1 domain. ATP contacts are provided by residues 79 to 87 (LGQGSFGKV) and K105. Residue D198 is the Proton acceptor of the active site. 3 positions are modified to phosphoserine: S232, S372, and S389. In terms of domain architecture, AGC-kinase C-terminal spans 331–400 (ANIDWDKLYK…VATSIAEEYK (70 aa)). The Protein kinase 2 domain maps to 426–683 (YELKEDIGVG…AEQILKHSWI (258 aa)). Residues 432–440 (IGVGSYSVC) and K455 each bind ATP. Residue D543 is the Proton acceptor of the active site. T581 bears the Phosphothreonine mark.

It belongs to the protein kinase superfamily. AGC Ser/Thr protein kinase family. S6 kinase subfamily. Forms a complex with MAPK3/ERK1 but not with MAPK9 or MAPK14 in serum-starved cells. The cofactor is Mg(2+). Post-translationally, phosphorylated at Ser-232, Ser-372, and Ser-389 in serum-starved cells.

It is found in the cytoplasm. It localises to the cytosol. Its subcellular location is the nucleus. It carries out the reaction L-seryl-[protein] + ATP = O-phospho-L-seryl-[protein] + ADP + H(+). The catalysed reaction is L-threonyl-[protein] + ATP = O-phospho-L-threonyl-[protein] + ADP + H(+). With respect to regulation, constitutively activated by phosphorylation at Ser-232, Ser-372, and Ser-389 in serum-starved cells. Does not require growth factor stimulation for significant kinase activity. In terms of biological role, constitutively active serine/threonine-protein kinase that exhibits growth-factor-independent kinase activity and that may participate in p53/TP53-dependent cell growth arrest signaling and play an inhibitory role during embryogenesis. The polypeptide is Ribosomal protein S6 kinase alpha-6 (RPS6KA6) (Homo sapiens (Human)).